We begin with the raw amino-acid sequence, 484 residues long: MSRKQRISAGLGLGASLLCCNPLFAGPVGPDRNFGMEVKVTAQSEDDRDLDTRSGGDAEGIALDLRPWVYGQRGNWGAMVMLQAVAATDIIETDPTDPNEEPGGDPANGFSRDSSRDPDKSYLALREFELGTIGRQRIRSLTNEGTWWDIHMESVNWTMDTSLLRAQAGVAKRFDEYRTDLDNLSAEDKDRTHVFGGLDYQWRQGHWAGFKVHHTSDDGDLPDSQMDVYEDRQSKSYTGDLTWLSVHLDRDFFNPRSTLPINYWGEFTWLTGEMDRSHFASDGSADHYKDVDVDAWAVDLGLRWNISDRWNVGAAYARGQAGEGDDESEQFMQTGLQSNRSTFTGLQTRIHRFGEASRGELTNLQVGTLFTSWKPREDLETSLIYHKFWRVDDDEDLGQNGISPIEKDGKPALKAGEKDLGQEVDLIITRYFNQGMLPANWGGELDEQSALIRLRSGLFFPSNAYASKGDSKMHRVFVDMIWRF.

A signal peptide spans 1 to 25 (MSRKQRISAGLGLGASLLCCNPLFA). Over residues 93–103 (TDPTDPNEEPG) the composition is skewed to acidic residues. The interval 93 to 118 (TDPTDPNEEPGGDPANGFSRDSSRDP) is disordered.

This sequence belongs to the AlgE family.

Its subcellular location is the cell outer membrane. It functions in the pathway glycan biosynthesis; alginate biosynthesis. Has non-porin-like, channel-forming properties and probably functions as an alginate permeability pore. The polypeptide is Alginate production protein AlgE (algE) (Azotobacter vinelandii).